The chain runs to 219 residues: MPLIGDDAPSFTAVTTQGIIKFPDDYKGKWVILFSHPADFTPVCTTEFMTFASMQEEFRSMNTELIGLSIDSVFSHIAWLKRIEEKIEYKGMKNLEIKFPVIEDLKMDVAKKYGMVQPKASTTQAVRAVFIIDPEAKIRTILYYPQSTGRNMQEIKRIVVALQKNAAEKVATPANWQPGEDVIIPPPSSMEAVKERMGKEEEGKRCLDWFMCLKKDTQK.

One can recognise a Thioredoxin domain in the interval 2–164 (PLIGDDAPSF…IKRIVVALQK (163 aa)). Cys-44 (cysteine sulfenic acid (-SOH) intermediate) is an active-site residue. Arg-127 provides a ligand contact to substrate. Cys-206 and Cys-212 are joined by a disulfide.

This sequence belongs to the peroxiredoxin family. Prx6 subfamily. As to quaternary structure, homodecamer. Pentamer of dimers that assemble into a ring structure.

It localises to the cytoplasm. The enzyme catalyses a hydroperoxide + [thioredoxin]-dithiol = an alcohol + [thioredoxin]-disulfide + H2O. In terms of biological role, thiol-specific peroxidase that catalyzes the reduction of hydrogen peroxide and organic hydroperoxides to water and alcohols, respectively. Plays a role in cell protection against oxidative stress by detoxifying peroxides. This chain is Peroxiredoxin, found in Methanosarcina mazei (strain ATCC BAA-159 / DSM 3647 / Goe1 / Go1 / JCM 11833 / OCM 88) (Methanosarcina frisia).